The primary structure comprises 237 residues: E3 ubiquitin-protein ligase RNF166 (237 aa).

The RING-type zinc-finger motif lies at 33-73 (CPICLEVYHRPVAIGSCGHTFCGECLQPCLQVPSPLCPLCR). Residues C98, C101, H113, and C117 each coordinate Zn(2+). A C2HC RNF-type zinc finger spans residues 98-117 (CRGCNKKVTLAKMRVHISSC). The 17-residue stretch at 221 to 237 (DEEAAFQAALALSLSEN) folds into the UIM domain.

It is found in the cytoplasm. It carries out the reaction S-ubiquitinyl-[E2 ubiquitin-conjugating enzyme]-L-cysteine + [acceptor protein]-L-lysine = [E2 ubiquitin-conjugating enzyme]-L-cysteine + N(6)-ubiquitinyl-[acceptor protein]-L-lysine.. It functions in the pathway protein modification; protein ubiquitination. Its function is as follows. E3 ubiquitin-protein ligase that promotes the ubiquitination of different substrates. In turn, participates in different biological processes including interferon production or autophagy. Plays a role in the activation of RNA virus-induced interferon-beta production by promoting the ubiquitination of TRAF3 and TRAF6. Also plays a role in the early recruitment of autophagy adapters to bacteria. Mediates 'Lys-29' and 'Lys-33'-linked ubiquitination of SQSTM1 leading to xenophagic targeting of bacteria and inhibition of their replication. This chain is E3 ubiquitin-protein ligase RNF166 (RNF166), found in Homo sapiens (Human).